Here is a 140-residue protein sequence, read N- to C-terminus: Austinoid biosynthesis clusters protein S (140 aa).

Belongs to the trt14 isomerase family. In terms of assembly, homodimer.

Its pathway is secondary metabolite biosynthesis; terpenoid biosynthesis. Functionally, part of the gene cluster B that mediates the biosynthesis of austinol and dehydroaustinol, two fungal meroterpenoids. The first step of the pathway is the synthesis of 3,5-dimethylorsellinic acid by the polyketide synthase ausA. 3,5-dimethylorsellinic acid is then prenylated by the polyprenyl transferase ausN. Further epoxidation by the FAD-dependent monooxygenase ausM and cyclization by the probable terpene cyclase ausL lead to the formation of protoaustinoid A. Protoaustinoid A is then oxidized to spiro-lactone preaustinoid A3 by the combined action of the FAD-binding monooxygenases ausB and ausC, and the dioxygenase ausE. Acid-catalyzed keto-rearrangement and ring contraction of the tetraketide portion of preaustinoid A3 by ausJ lead to the formation of preaustinoid A4. The aldo-keto reductase ausK, with the help of ausH, is involved in the next step by transforming preaustinoid A4 into isoaustinone which is in turn hydroxylated by the P450 monooxygenase ausI to form austinolide. Finally, the cytochrome P450 monooxygenase ausG modifies austinolide to austinol. Austinol can be further modified to dehydroaustinol which forms a diffusible complex with diorcinol that initiates conidiation. Due to genetic rearrangements of the clusters and the subsequent loss of some enzymes, the end products of the Emericella nidulans austinoid biosynthesis clusters are austinol and dehydroaustinol, even if additional enzymes, such as the O-acetyltransferase ausQ and the cytochrome P450 monooxygenase ausR are still functional. AusS is necessary for austinoids production and may play a possible function as a regulator. The protein is Austinoid biosynthesis clusters protein S of Emericella nidulans (strain FGSC A4 / ATCC 38163 / CBS 112.46 / NRRL 194 / M139) (Aspergillus nidulans).